The chain runs to 418 residues: Hydroxysteroid dehydrogenase-like protein 2 (418 aa).

Residues 17 to 23 (GASRGIG), K42, and D74 each bind NADP(+). Residue K42 is modified to N6-(2-hydroxyisobutyryl)lysine. Residue K116 is modified to N6-acetyllysine. Y168 acts as the Proton acceptor in catalysis. K172 is a binding site for NADP(+). Positions 287-310 (STGAVPEFKEEKPQPQPKPRSGAV) are disordered. The SCP2 domain maps to 306-415 (RSGAVEETFR…KLEKLMNQMN (110 aa)). K318 carries the post-translational modification N6-succinyllysine.

It belongs to the short-chain dehydrogenases/reductases (SDR) family.

The protein localises to the peroxisome. It is found in the mitochondrion. In terms of biological role, has apparently no steroid dehydrogenase activity. Controls bile acid (BA) and lipid metabolism in response to nutritional cues. This is Hydroxysteroid dehydrogenase-like protein 2 (HSDL2) from Pongo abelii (Sumatran orangutan).